The following is a 427-amino-acid chain: Glutamate-1-semialdehyde 2,1-aminomutase (427 aa).

Lysine 266 is subject to N6-(pyridoxal phosphate)lysine.

This sequence belongs to the class-III pyridoxal-phosphate-dependent aminotransferase family. HemL subfamily. As to quaternary structure, homodimer. Pyridoxal 5'-phosphate serves as cofactor.

It is found in the cytoplasm. It carries out the reaction (S)-4-amino-5-oxopentanoate = 5-aminolevulinate. It functions in the pathway porphyrin-containing compound metabolism; protoporphyrin-IX biosynthesis; 5-aminolevulinate from L-glutamyl-tRNA(Glu): step 2/2. This chain is Glutamate-1-semialdehyde 2,1-aminomutase, found in Dechloromonas aromatica (strain RCB).